Here is a 53-residue protein sequence, read N- to C-terminus: Mitochondrial sheath formation-associated protein (53 aa).

Mitochondrial intermembrane-side segments run 1 to 6 and 1 to 7; these read MIVLGW and MIVLGWM. 2 consecutive transmembrane segments (helical) span residues 7–23 and 8–24; these read MLFV…PEAM and LFVG…EAMP. Cytoplasmic segments lie at residues 24 to 53 and 25 to 40; these read PPTL…ELLL and PTLK…ENKA.

As to quaternary structure, interacts with VDAC3. In terms of tissue distribution, testis specific. Detected only in germ cells at the step of spermiogenesis (at protein level). Expressed during the middle steps of spermatid development. Testis specific. Detected only in germ cells at the step of spermiogenesis (at protein level). Expressed in the late steps of spermatid development.

The protein resides in the mitochondrion outer membrane. In terms of biological role, regulates sperm development. May be involved in mitochondrial sheath formation. This is Mitochondrial sheath formation-associated protein from Mus musculus (Mouse).